The chain runs to 798 residues: ATP-dependent RNA helicase bel (798 aa).

Positions 16 to 248 (VAGLDLNGGS…SRWKEGGGSN (233 aa)) are disordered. Positions 31 to 42 (PITSKTSTNSVT) are enriched in polar residues. 3 stretches are compositionally biased toward gly residues: residues 94-110 (RGGGGEYRRGGGGGGRG), 118-132 (YGYGSGGGGRRGGGG), and 154-178 (SGGGGGGGRGFGRGPSYRGGGGGSG). Ser-177 and Ser-179 each carry phosphoserine. The span at 198 to 209 (RNDRWQEPERPA) shows a compositional bias: basic and acidic residues. Ser-214 and Ser-219 each carry phosphoserine. The short motif at 295–323 (TSFDDVQLTEIIRNNVALARYDKPTPVQK) is the Q motif element. ATP contacts are provided by residues 315-322 (YDKPTPVQ) and 339-346 (AQTGSGKT). Residues 326 to 515 (IPIIINGRDL…SDFLSNYIFL (190 aa)) enclose the Helicase ATP-binding domain. Residues 459 to 462 (DEAD) carry the DEAD box motif. Residues 542–693 (YLLDLLSSIR…EIPSFMEDMS (152 aa)) enclose the Helicase C-terminal domain. Phosphoserine is present on Ser-638. 2 disordered regions span residues 689 to 765 (MEDM…SGGG) and 778 to 798 (GGSYGGGSASHSSNAPDWWAQ). 2 stretches are compositionally biased toward gly residues: residues 706–717 (RGGGGRYGGGFG) and 740–750 (GGSGSGGGGGS).

It belongs to the DEAD box helicase family. DDX3/DED1 subfamily. As to expression, vas and bel colocalize in nuage (perinuclear, electron-dense granules in germline cells) and at the oocyte posterior during oogenesis.

The protein resides in the cytoplasm. The catalysed reaction is ATP + H2O = ADP + phosphate + H(+). Functionally, ATP-dependent RNA helicase that is essential and required for cellular function, larval growth, and for male and female fertility. Also required for RNA interference (RNAi), double-stranded RNA induces potent and specific gene silencing, by acting downstream of dsRNA internalization. RNAi is mediated by the RNA-induced silencing complex (RISC), a sequence-specific, multicomponent nuclease that destroys or silences messenger RNAs homologous to the silencing trigger. The chain is ATP-dependent RNA helicase bel from Drosophila melanogaster (Fruit fly).